The following is a 455-amino-acid chain: Protein indeterminate-domain 7 (455 aa).

Residues methionine 1 to glutamine 52 are disordered. Residues methionine 17–glutamine 49 show a composition bias toward polar residues. Position 82 is a phosphoserine (serine 82). 2 C2H2-type zinc fingers span residues phenylalanine 92 to histidine 114 and tyrosine 134 to histidine 164. Residues isoleucine 156–lysine 163 carry the Nuclear localization signal motif. The C2H2-type 2; degenerate zinc-finger motif lies at tryptophan 169–glycine 192. Cysteine 171, cysteine 174, histidine 187, cysteine 191, cysteine 198, cysteine 200, histidine 213, and cysteine 217 together coordinate Zn(2+). Residues tyrosine 196–alanine 219 form a CCHC-type 2; atypical zinc finger. The SHR-binding stretch occupies residues arginine 206–aspartate 218. Residues glutamine 235–serine 351 are disordered. Composition is skewed to low complexity over residues glutamine 248–asparagine 265 and serine 288–asparagine 299.

The protein localises to the nucleus. Its function is as follows. Probable transcription factor. This is Protein indeterminate-domain 7 from Arabidopsis thaliana (Mouse-ear cress).